We begin with the raw amino-acid sequence, 268 residues long: Agamous-like MADS-box protein AGL15 (268 aa).

The MADS-box domain maps to 1–61; it reads MGRGKIEIKR…GKLFEYSSTG (61 aa). Positions 80–170 constitute a K-box domain; that stretch reads AEEDCAEVDI…RRQVQELRSF (91 aa). The segment at 205–268 is disordered; the sequence is TDSDTTLQLG…PEAKRQRFSV (64 aa). Over residues 218 to 232 the composition is skewed to basic and acidic residues; the sequence is EAHDRRTNEGERESP. The segment covering 233-244 has biased composition (polar residues); sequence SSDSVTTNTSSE.

In terms of assembly, homodimer. Interacts with SVP, AGL24, AP1, AGL6, AG, AGL1, AGL11, AGL5, AGL16, SOC1 and AGL21. Expressed at low levels in flowers and siliques. Also present in seedlings. Detected during embryogenesis and accumulates during early seed development (at protein level). Expressed in shoot apices and the base of leaf petioles.

It is found in the nucleus. It localises to the cytoplasm. Functionally, transcription factor involved in the negative regulation of flowering, probably through the photoperiodic pathway. Acts both as an activator and as a repressor of transcription. Binds DNA in a sequence-specific manner in large CArG motif 5'-CC (A/T)8 GG-3'. Participates probably in the regulation of programs active during the early stages of embryo development. Prevents premature perianth senescence and abscission, fruits development and seed desiccation. Stimulates the expression of at least DTA4, LEC2, FUS3, ABI3, AT4G38680/CSP2 and GRP2B/CSP4. Can enhance somatic embryo development in vitro. The protein is Agamous-like MADS-box protein AGL15 (AGL15) of Arabidopsis thaliana (Mouse-ear cress).